Here is a 67-residue protein sequence, read N- to C-terminus: Beta-defensin 110 (67 aa).

The N-terminal stretch at M1–A19 is a signal peptide. Intrachain disulfides connect C35–C63, C42–C56, and C46–C64.

This sequence belongs to the beta-defensin family.

It is found in the secreted. In terms of biological role, has antibacterial activity. The polypeptide is Beta-defensin 110 (DEFB110) (Pan troglodytes (Chimpanzee)).